A 142-amino-acid chain; its full sequence is Large ribosomal subunit protein uL13 (142 aa).

The protein belongs to the universal ribosomal protein uL13 family. As to quaternary structure, part of the 50S ribosomal subunit.

In terms of biological role, this protein is one of the early assembly proteins of the 50S ribosomal subunit, although it is not seen to bind rRNA by itself. It is important during the early stages of 50S assembly. This is Large ribosomal subunit protein uL13 from Burkholderia mallei (strain NCTC 10247).